A 101-amino-acid polypeptide reads, in one-letter code: MAKQSMKARDVKRVKLAEKFYAKRVELKKIISDVNASDEDRWDAVLKLQTLPRDSSPSRQRNRCRQTGRPHGVLRKFGLSRIKVREAAMRGEIPGLKKASW.

Belongs to the universal ribosomal protein uS14 family. In terms of assembly, part of the 30S ribosomal subunit. Contacts proteins S3 and S10.

Binds 16S rRNA, required for the assembly of 30S particles and may also be responsible for determining the conformation of the 16S rRNA at the A site. The protein is Small ribosomal subunit protein uS14 of Haemophilus influenzae (strain 86-028NP).